Reading from the N-terminus, the 439-residue chain is Taxadien-5-alpha-ol O-acetyltransferase (439 aa).

Catalysis depends on proton acceptor residues histidine 164 and aspartate 373.

The protein belongs to the plant acyltransferase family.

It catalyses the reaction taxa-4(20),11-dien-5alpha-ol + acetyl-CoA = taxa-4(20),11-dien-5alpha-yl acetate + CoA. The protein operates within alkaloid biosynthesis; taxol biosynthesis; 10-deacetyl-2-debenzoylbaccatin III from taxa-4(20),11-dien-5alpha-ol: step 1/3. In Taxus chinensis (Chinese yew), this protein is Taxadien-5-alpha-ol O-acetyltransferase.